Reading from the N-terminus, the 443-residue chain is Probable glycine dehydrogenase (decarboxylating) subunit 1 (443 aa).

The protein belongs to the GcvP family. N-terminal subunit subfamily. As to quaternary structure, the glycine cleavage system is composed of four proteins: P, T, L and H. In this organism, the P 'protein' is a heterodimer of two subunits.

It carries out the reaction N(6)-[(R)-lipoyl]-L-lysyl-[glycine-cleavage complex H protein] + glycine + H(+) = N(6)-[(R)-S(8)-aminomethyldihydrolipoyl]-L-lysyl-[glycine-cleavage complex H protein] + CO2. Functionally, the glycine cleavage system catalyzes the degradation of glycine. The P protein binds the alpha-amino group of glycine through its pyridoxal phosphate cofactor; CO(2) is released and the remaining methylamine moiety is then transferred to the lipoamide cofactor of the H protein. The chain is Probable glycine dehydrogenase (decarboxylating) subunit 1 from Solidesulfovibrio magneticus (strain ATCC 700980 / DSM 13731 / RS-1) (Desulfovibrio magneticus).